Consider the following 758-residue polypeptide: Probable TonB-dependent receptor NMB0964 (758 aa).

Residues 1 to 24 (MAQTTLKPIVLSILLINTPLLAQA) form the signal peptide. A TBDR plug domain is found at 50-161 (LLHTSTASDK…VAGLVDVADG (112 aa)). The TBDR beta-barrel domain occupies 171–758 (GVSGELGLRL…SFTGGVNVKF (588 aa)). Positions 741 to 758 (SDTPQMGRSFTGGVNVKF) match the TonB C-terminal box motif.

This sequence belongs to the TonB-dependent receptor family.

The protein resides in the cell outer membrane. Its function is as follows. Probable receptor, TonB-dependent. This is Probable TonB-dependent receptor NMB0964 from Neisseria meningitidis serogroup B (strain ATCC BAA-335 / MC58).